Consider the following 361-residue polypeptide: Teichoic acids export ATP-binding protein TagH (361 aa).

The region spanning 13-246 (TKEYDLYKSQ…YREFTKWFKG (234 aa)) is the ABC transporter domain. Position 60–67 (60–67 (GVNGSGKS)) interacts with ATP. The unknown stretch occupies residues 247-361 (QSKKEKKHFQ…HDTNATSGVK (115 aa)).

Belongs to the ABC transporter superfamily. Teichoic acids exporter (TC 3.A.1.104.1) family. In terms of assembly, the complex is composed of two ATP-binding proteins (TagH) and two transmembrane proteins (TagG).

The protein resides in the cell membrane. The catalysed reaction is ATP + H2O + teichoic acidSide 1 = ADP + phosphate + teichoic acidSide 2.. Functionally, part of the ABC transporter complex TagGH involved in teichoic acids export. Responsible for energy coupling to the transport system. The polypeptide is Teichoic acids export ATP-binding protein TagH (Levilactobacillus brevis (strain ATCC 367 / BCRC 12310 / CIP 105137 / JCM 1170 / LMG 11437 / NCIMB 947 / NCTC 947) (Lactobacillus brevis)).